We begin with the raw amino-acid sequence, 387 residues long: Leucine aminopeptidase 1 (387 aa).

The first 18 residues, 1-18 (MKFTNLSLLALSASLASA), serve as a signal peptide directing secretion. A propeptide spanning residues 19 to 86 (RFVEQHETDQ…LGTLRTSSVK (68 aa)) is cleaved from the precursor. Residue asparagine 179 is glycosylated (N-linked (GlcNAc...) asparagine). Zn(2+) is bound by residues histidine 187, aspartate 206, glutamate 245, and aspartate 272. Cysteine 321 and cysteine 325 are oxidised to a cystine. Residue histidine 354 participates in Zn(2+) binding.

Belongs to the peptidase M28 family. M28E subfamily. In terms of assembly, monomer. It depends on Zn(2+) as a cofactor.

Its subcellular location is the secreted. Functionally, extracellular aminopeptidase that allows assimilation of proteinaceous substrates. The polypeptide is Leucine aminopeptidase 1 (lap1) (Sclerotinia sclerotiorum (strain ATCC 18683 / 1980 / Ss-1) (White mold)).